The primary structure comprises 826 residues: Ribonucleoside-diphosphate reductase large subunit (826 aa).

Substrate-binding positions include Thr-171, 186-187 (SC), Gly-217, 387-391 (NLCAE), and 594-598 (PTSGC). Cys-187 and Cys-403 are disulfide-bonded. Residue Asn-387 is the Proton acceptor of the active site. The active-site Cysteine radical intermediate is Cys-389. Glu-391 functions as the Proton acceptor in the catalytic mechanism.

The protein belongs to the ribonucleoside diphosphate reductase large chain family. As to quaternary structure, heterotetramer composed of a homodimer of the large subunit (R1) and a homodimer of the small subunit (R2). Larger multisubunit protein complex are also active, composed of (R1)n(R2)n.

The catalysed reaction is a 2'-deoxyribonucleoside 5'-diphosphate + [thioredoxin]-disulfide + H2O = a ribonucleoside 5'-diphosphate + [thioredoxin]-dithiol. Ribonucleoside-diphosphate reductase holoenzyme provides the precursors necessary for viral DNA synthesis. Allows virus growth in non-dividing cells, as well as reactivation from latency in infected hosts. Catalyzes the biosynthesis of deoxyribonucleotides from the corresponding ribonucleotides. The chain is Ribonucleoside-diphosphate reductase large subunit from Epstein-Barr virus (strain GD1) (HHV-4).